The chain runs to 272 residues: Hematopoietically-expressed homeobox protein hhex (272 aa).

Residues 137-196 (RKGGQVRFSNDQTIELEKKFETQKYLSPPERKRLAKMLQLSERQVKTWFQNRRAKWRRLK) constitute a DNA-binding region (homeobox). Residues 222–272 (CLSAEQKSRESSLDDPTSSPTSQGNLDSEVSDDSDQEVDIEGDKGYYNCAH) are disordered. Positions 250–261 (EVSDDSDQEVDI) are enriched in acidic residues.

First expressed in the dorsal endomesoderm of the gastrula stage embryo. The dorsal endomesoderm contributes to forming the embryonic liver, and expression continues in the liver throughout development. Also expressed in precursors of the developing thyroid gland, and beginning at the tailbud stage, expressed in the ventral region of the head. Also transiently expressed in the endothelial layer of developing vascular tissues of the embryo, beginning at the tailbud stages.

It localises to the nucleus. In terms of biological role, recognizes the DNA sequence 5'-ATTAA-3'. Transcriptional repressor. Regulates the differentiation of both endothelial and blood cells. Probably plays a role in the proliferation of vascular endothelial cells during blood vessel development. Establishes anterior identity at two levels; acts early to enhance canonical wnt-signaling by repressing expression of tle4, and acts later to inhibit nodal-signaling by directly targeting nodal/nr1 and nodal2/nr2. May play a role in liver development. Induces heart development. This chain is Hematopoietically-expressed homeobox protein hhex, found in Xenopus laevis (African clawed frog).